The primary structure comprises 473 residues: uncharacterized protein (473 aa).

Positions 1 to 19 (MIRAFLVFPYLYILVQSNG) are cleaved as a signal peptide.

This is an uncharacterized protein from Methanocaldococcus jannaschii (strain ATCC 43067 / DSM 2661 / JAL-1 / JCM 10045 / NBRC 100440) (Methanococcus jannaschii).